A 212-amino-acid chain; its full sequence is Imidazole glycerol phosphate synthase subunit HisH (212 aa).

Residues 3-208 enclose the Glutamine amidotransferase type-1 domain; sequence RIVIVDYGMG…GRMVCDLIST (206 aa). The active-site Nucleophile is the Cys81. Catalysis depends on residues His183 and Glu185.

In terms of assembly, heterodimer of HisH and HisF.

The protein resides in the cytoplasm. The enzyme catalyses 5-[(5-phospho-1-deoxy-D-ribulos-1-ylimino)methylamino]-1-(5-phospho-beta-D-ribosyl)imidazole-4-carboxamide + L-glutamine = D-erythro-1-(imidazol-4-yl)glycerol 3-phosphate + 5-amino-1-(5-phospho-beta-D-ribosyl)imidazole-4-carboxamide + L-glutamate + H(+). The catalysed reaction is L-glutamine + H2O = L-glutamate + NH4(+). It functions in the pathway amino-acid biosynthesis; L-histidine biosynthesis; L-histidine from 5-phospho-alpha-D-ribose 1-diphosphate: step 5/9. Functionally, IGPS catalyzes the conversion of PRFAR and glutamine to IGP, AICAR and glutamate. The HisH subunit catalyzes the hydrolysis of glutamine to glutamate and ammonia as part of the synthesis of IGP and AICAR. The resulting ammonia molecule is channeled to the active site of HisF. This is Imidazole glycerol phosphate synthase subunit HisH from Symbiobacterium thermophilum (strain DSM 24528 / JCM 14929 / IAM 14863 / T).